The sequence spans 433 residues: Evolutionarily conserved signaling intermediate in Toll pathway, mitochondrial (433 aa).

Residues M1 to H48 constitute a mitochondrion transit peptide. The tract at residues Q36 to R63 is disordered. A Glycyl lysine isopeptide (Lys-Gly) (interchain with G-Cter in ubiquitin) cross-link involves residue K372. A disordered region spans residues S397–S433.

The protein belongs to the ECSIT family. In terms of assembly, interacts with MAP3K1, SMAD4 and TRAF6. Interacts with SMAD1 only after BMP4-treatment. Part of the mitochondrial complex I assembly/MCIA complex that comprises at least the core subunits TMEM126B, NDUFAF1, ECSIT and ACAD9 and complement subunits such as COA1 and TMEM186. Interacts with NDUFAF1. Interacts with ACAD9. Interacts with TRIM59. Interacts with TMEM70 and TMEM242. Interacts (when ubiquitinated) with NF-kappa-B subunits RELA and NFKB1. Interacts with RIGI, IFIT1 and MAVS; these interactions promote RLR-mediated type I IFN induction. Interacts with SQSTM1; this interaction inhibits TLR4 signaling via functional regulation of the TRAF6-ECSIT complex. Interacts with cereblon/CRBN; this interaction inhibits the ubiquitination of ECSIT. Ubiquitinated on Lys-372; leading to translocation in the nucleus together with RELA and NFKB1 and expression of NF-kappa-B-dependent genes.

Its subcellular location is the cytoplasm. The protein resides in the nucleus. The protein localises to the mitochondrion. Adapter protein that plays a role in different signaling pathways including TLRs and IL-1 pathways or innate antiviral induction signaling. Plays a role in the activation of NF-kappa-B by forming a signal complex with TRAF6 and TAK1/MAP3K7 to activate TAK1/MAP3K7 leading to activation of IKKs. Once ubiquitinated, interacts with the dissociated RELA and NFKB1 proteins and translocates to the nucleus where it induces NF-kappa-B-dependent gene expression. Plays a role in innate antiviral immune response by bridging the pattern recognition receptors RIGI and MDA5/IFIT1 to the MAVS complex at the mitochondrion. Promotes proteolytic activation of MAP3K1. Involved in the BMP signaling pathway. Required for normal embryonic development. Its function is as follows. As part of the MCIA complex, involved in the assembly of the mitochondrial complex I. The protein is Evolutionarily conserved signaling intermediate in Toll pathway, mitochondrial of Bos taurus (Bovine).